We begin with the raw amino-acid sequence, 137 residues long: Small ribosomal subunit protein bS6 (137 aa).

This sequence belongs to the bacterial ribosomal protein bS6 family.

In terms of biological role, binds together with bS18 to 16S ribosomal RNA. In Sulfurimonas denitrificans (strain ATCC 33889 / DSM 1251) (Thiomicrospira denitrificans (strain ATCC 33889 / DSM 1251)), this protein is Small ribosomal subunit protein bS6.